An 811-amino-acid chain; its full sequence is Phenylalanine--tRNA ligase beta subunit (811 aa).

The region spanning 40–156 is the tRNA-binding domain; that stretch reads AEKNENIVVG…EDIEVGSKVD (117 aa). Positions 411–486 constitute a B5 domain; that stretch reads KSTKEVKVPL…RIHGYDHLPY (76 aa). 4 residues coordinate Mg(2+): Asp-464, Asp-470, Glu-473, and Glu-474. The region spanning 717–810 is the FDX-ACB domain; it reads PRYPSVSRDI…VNKKFGSYVR (94 aa).

Belongs to the phenylalanyl-tRNA synthetase beta subunit family. Type 1 subfamily. In terms of assembly, tetramer of two alpha and two beta subunits. Requires Mg(2+) as cofactor.

The protein resides in the cytoplasm. It catalyses the reaction tRNA(Phe) + L-phenylalanine + ATP = L-phenylalanyl-tRNA(Phe) + AMP + diphosphate + H(+). This Oceanobacillus iheyensis (strain DSM 14371 / CIP 107618 / JCM 11309 / KCTC 3954 / HTE831) protein is Phenylalanine--tRNA ligase beta subunit.